A 271-amino-acid polypeptide reads, in one-letter code: MDVQTLMAASAGAVASRLLCHPIDTITVHKQTIGKFSFKTMPLKAYYRGLPISLTLITPATCLYLSTYVEAKRRFKPSVGEGAILYSICGMTAEVVSSFVWTPLEVIKARTQISQKGSVINTISTLARSEGLKGFYRGYWMGVAIYLPTTVSWWVCYEESKKYLQKQSNWDISVIAPICSALGTVVATTISTPLDIVKTRYQVATSSAMRKAEYGLQAEKELGILEIAKLLFSKHGVKGFTRGLFTRMCYIMPSGMISMSVFESFKSKDID.

Solcar repeat units follow at residues 3 to 74, 81 to 163, and 171 to 268; these read VQTL…AKRR, EGAI…SKKY, and DISV…FKSK. 6 helical membrane-spanning segments follow: residues 5-26, 49-69, 84-104, 138-158, 170-190, and 240-261; these read TLMA…IDTI, GLPI…STYV, ILYS…WTPL, GYWM…VCYE, WDIS…ATTI, and FTRG…SMSV.

Belongs to the mitochondrial carrier (TC 2.A.29) family.

It localises to the mitochondrion inner membrane. This is an uncharacterized protein from Schizosaccharomyces pombe (strain 972 / ATCC 24843) (Fission yeast).